The chain runs to 510 residues: Inositol-3-phosphate synthase (510 aa).

NAD(+) contacts are provided by Gly-70, Gly-71, Asn-72, Asn-73, Asp-143, Ile-180, Gln-190, Arg-193, Thr-230, Ala-231, Asn-232, Thr-233, Gly-281, Ser-282, Asp-306, Ser-309, Asn-340, Asn-341, Asp-342, Lys-355, Gly-393, Asp-394, Asp-422, and Ser-423.

It belongs to the myo-inositol 1-phosphate synthase family. NAD(+) is required as a cofactor.

The protein localises to the cytoplasm. It localises to the cytosol. The protein resides in the nucleus. The catalysed reaction is D-glucose 6-phosphate = 1D-myo-inositol 3-phosphate. Its pathway is polyol metabolism; myo-inositol biosynthesis; myo-inositol from D-glucose 6-phosphate: step 1/2. Key enzyme in myo-inositol biosynthesis pathway that catalyzes the conversion of glucose 6-phosphate to 1-myo-inositol 1-phosphate in a NAD-dependent manner. This chain is Inositol-3-phosphate synthase, found in Sesamum indicum (Oriental sesame).